The following is a 507-amino-acid chain: Dolichyl pyrophosphate Man9GlcNAc2 alpha-1,3-glucosyltransferase (507 aa).

Topologically, residues 1–3 are cytoplasmic; that stretch reads MEK. A helical transmembrane segment spans residues 4-24; it reads WYLMTVVVLIGLTVRWTVSLN. At 25 to 114 the chain is on the lumenal side; the sequence is SYSGAGKPPM…SQAHKLFMRT (90 aa). N59 carries an N-linked (GlcNAc...) asparagine glycan. The chain crosses the membrane as a helical span at residues 115–135; sequence TVLIADLLIYIPAVVLYCCCL. Residues 136-143 lie on the Cytoplasmic side of the membrane; it reads KEISTKKK. The helical transmembrane segment at 144-164 threads the bilayer; sequence IANALCILLYPGLILIDYGHF. The Lumenal portion of the chain corresponds to 165–172; it reads QYNSVSLG. A helical transmembrane segment spans residues 173-193; sequence FALWGVLGISCDCDLLGSLAF. Residues 194 to 226 lie on the Cytoplasmic side of the membrane; it reads CLAINYKQMELYHALPFFCFLLGKCFKKGLKGK. The helical transmembrane segment at 227-247 threads the bilayer; the sequence is GFVLLVKLACIVVASFVLCWL. Residues 248 to 297 are Lumenal-facing; that stretch reads PFFTEREQTLQVLRRLFPVDRGLFEDKVANIWCSFNVFLKIKDILPRHIQ. Residues 298 to 318 traverse the membrane as a helical segment; that stretch reads LIMSFCFTFLSLLPACIKLIL. Residues 319 to 323 are Cytoplasmic-facing; sequence QPSSK. A helical transmembrane segment spans residues 324-344; that stretch reads GFKFTLVSCALSFFLFSFQVH. The Lumenal portion of the chain corresponds to 345–361; sequence EKSILLVSLPVCLVLSE. The chain crosses the membrane as a helical span at residues 362–382; that stretch reads IPFMSTWFLLVSTFSMLPLLL. Residues 383–387 are Cytoplasmic-facing; that stretch reads KDELL. Residues 388–408 form a helical membrane-spanning segment; sequence MPSVVTTMAFFIACVTSFSIF. Residues 409 to 437 are Lumenal-facing; sequence EKTSEEELQLKSFSISVRKYLPCFTFLSR. Residues 438-458 traverse the membrane as a helical segment; the sequence is IIQYLFLISVITMVLLTLMTV. The Cytoplasmic segment spans residues 459 to 473; it reads TLGPPQKLPDLFSVL. Residues 474–494 form a helical membrane-spanning segment; it reads VCFVSCLNFLFFLVYFNIIIV. The Lumenal segment spans residues 495-507; sequence WDSKSGRNQKKIS.

Belongs to the ALG6/ALG8 glucosyltransferase family.

The protein resides in the endoplasmic reticulum membrane. It catalyses the reaction an alpha-D-Man-(1-&gt;2)-alpha-D-Man-(1-&gt;2)-alpha-D-Man-(1-&gt;3)-[alpha-D-Man-(1-&gt;2)-alpha-D-Man-(1-&gt;3)-[alpha-D-Man-(1-&gt;2)-alpha-D-Man-(1-&gt;6)]-alpha-D-Man-(1-&gt;6)]-beta-D-Man-(1-&gt;4)-beta-D-GlcNAc-(1-&gt;4)-alpha-D-GlcNAc-diphospho-di-trans,poly-cis-dolichol + a di-trans,poly-cis-dolichyl beta-D-glucosyl phosphate = an alpha-D-Glc-(1-&gt;3)-alpha-D-Man-(1-&gt;2)-alpha-D-Man-(1-&gt;2)-alpha-D-Man-(1-&gt;3)-[alpha-D-Man-(1-&gt;2)-alpha-D-Man-(1-&gt;3)-[alpha-D-Man-(1-&gt;2)-alpha-D-Man-(1-&gt;6)]-alpha-D-Man-(1-&gt;6)]-beta-D-Man-(1-&gt;4)-beta-D-GlcNAc-(1-&gt;4)-alpha-D-GlcNAc-diphospho-di-trans,poly-cis-dolichol + a di-trans,poly-cis-dolichyl phosphate + H(+). Its pathway is protein modification; protein glycosylation. Its function is as follows. Dolichyl pyrophosphate Man9GlcNAc2 alpha-1,3-glucosyltransferase that operates in the biosynthetic pathway of dolichol-linked oligosaccharides, the glycan precursors employed in protein asparagine (N)-glycosylation. The assembly of dolichol-linked oligosaccharides begins on the cytosolic side of the endoplasmic reticulum membrane and finishes in its lumen. The sequential addition of sugars to dolichol pyrophosphate produces dolichol-linked oligosaccharides containing fourteen sugars, including two GlcNAcs, nine mannoses and three glucoses. Once assembled, the oligosaccharide is transferred from the lipid to nascent proteins by oligosaccharyltransferases. In the lumen of the endoplasmic reticulum, adds the first glucose residue from dolichyl phosphate glucose (Dol-P-Glc) onto the lipid-linked oligosaccharide intermediate Man(9)GlcNAc(2)-PP-Dol to produce Glc(1)Man(9)GlcNAc(2)-PP-Dol. Glc(1)Man(9)GlcNAc(2)-PP-Dol is a substrate for ALG8, the following enzyme in the biosynthetic pathway. The chain is Dolichyl pyrophosphate Man9GlcNAc2 alpha-1,3-glucosyltransferase from Pongo abelii (Sumatran orangutan).